Here is a 35-residue protein sequence, read N- to C-terminus: Dolichyl-diphosphooligosaccharide--protein glycosyltransferase subunit 4C (35 aa).

Topologically, residues 1–8 (MFDDQDLG) are lumenal. The chain crosses the membrane as a helical span at residues 9-29 (FFANFLGIFIFILVIAYHFVM). Residues 30–35 (ADPKFE) lie on the Cytoplasmic side of the membrane.

The protein belongs to the OST4 family. As to quaternary structure, component of the oligosaccharyltransferase (OST) complex.

The protein localises to the endoplasmic reticulum membrane. In terms of biological role, subunit of the oligosaccharyl transferase (OST) complex that catalyzes the initial transfer of a defined glycan (Glc(3)Man(9)GlcNAc(2) in eukaryotes) from the lipid carrier dolichol-pyrophosphate to an asparagine residue within an Asn-X-Ser/Thr consensus motif in nascent polypeptide chains, the first step in protein N-glycosylation. N-glycosylation occurs cotranslationally and the complex associates with the Sec61 complex at the channel-forming translocon complex that mediates protein translocation across the endoplasmic reticulum (ER). All subunits are required for a maximal enzyme activity. This is Dolichyl-diphosphooligosaccharide--protein glycosyltransferase subunit 4C (OST4C) from Arabidopsis thaliana (Mouse-ear cress).